A 321-amino-acid polypeptide reads, in one-letter code: Lipoyl synthase (321 aa).

Residues Cys68, Cys73, Cys79, Cys94, Cys98, Cys101, and Ser308 each coordinate [4Fe-4S] cluster. Residues 80-297 form the Radical SAM core domain; sequence FNHGTATFMI…KAEAMAMGFT (218 aa).

This sequence belongs to the radical SAM superfamily. Lipoyl synthase family. [4Fe-4S] cluster serves as cofactor.

The protein localises to the cytoplasm. The catalysed reaction is [[Fe-S] cluster scaffold protein carrying a second [4Fe-4S](2+) cluster] + N(6)-octanoyl-L-lysyl-[protein] + 2 oxidized [2Fe-2S]-[ferredoxin] + 2 S-adenosyl-L-methionine + 4 H(+) = [[Fe-S] cluster scaffold protein] + N(6)-[(R)-dihydrolipoyl]-L-lysyl-[protein] + 4 Fe(3+) + 2 hydrogen sulfide + 2 5'-deoxyadenosine + 2 L-methionine + 2 reduced [2Fe-2S]-[ferredoxin]. Its pathway is protein modification; protein lipoylation via endogenous pathway; protein N(6)-(lipoyl)lysine from octanoyl-[acyl-carrier-protein]: step 2/2. Functionally, catalyzes the radical-mediated insertion of two sulfur atoms into the C-6 and C-8 positions of the octanoyl moiety bound to the lipoyl domains of lipoate-dependent enzymes, thereby converting the octanoylated domains into lipoylated derivatives. This chain is Lipoyl synthase, found in Yersinia enterocolitica serotype O:8 / biotype 1B (strain NCTC 13174 / 8081).